The chain runs to 172 residues: Odorant-binding protein (172 aa).

The N-terminal stretch at 1-15 (MVKFLLIVLALGVSC) is a signal peptide. 2 cysteine pairs are disulfide-bonded: cysteine 60–cysteine 64 and cysteine 79–cysteine 170.

This sequence belongs to the calycin superfamily. Lipocalin family. Homodimer.

The protein resides in the secreted. This protein is found in nasal epithelium and it binds a wide variety of chemical odorants. The chain is Odorant-binding protein (Obp1f) from Rattus norvegicus (Rat).